Consider the following 361-residue polypeptide: MVHAEAFSRPLSRNEVVGLIFRLTIFGAVTYFTIKWMVDAIDPTRKQKVEAQKQAEKLMKQIGVKNVKLSEYEMSIAAHLVDPLNMHVTWSDIAGLDDVITDLKDTVILPIKKKHLFENSRLLQPPKGVLLYGPPGCGKTLIAKATAKEAGCRFINLQPSTLTDKWYGESQKLAAAVFSLAIKLQPSIIFIDEIDSFLRNRSSSDHEATAMMKAQFMSLWDGLDTDHSCQVIVMGATNRPQDLDSAIMRRMPTRFHINQPALKQREAILKLILKNENVDRHVDLLEVAQETDGFSGSDLKEMCRDAALLCVREYVNSTSEESHDEDEIRPVQQQDLHRAIEKMKKSKDAAFQSVLTHVCLD.

At 1-15 (MVHAEAFSRPLSRNE) the chain is on the mitochondrial intermembrane side. Residues 16 to 32 (VVGLIFRLTIFGAVTYF) form a helical membrane-spanning segment. Residues 33–361 (TIKWMVDAID…QSVLTHVCLD (329 aa)) lie on the Cytoplasmic side of the membrane. 133–140 (GPPGCGKT) serves as a coordination point for ATP. Position 322 is a phosphoserine (Ser-322).

Belongs to the AAA ATPase family. MSP1 subfamily. In terms of assembly, interacts with GRIA2 and GRIP1 in an ATP-dependent manner. ATAD1-catalyzed ATP hydrolysis disrupts not only its binding to GRIA2 and GRIP1, but also interaction between GRIP1 and GRIA2, leading to AMPAR complex disassembly.

The protein resides in the mitochondrion outer membrane. The protein localises to the peroxisome membrane. Its subcellular location is the postsynaptic cell membrane. The enzyme catalyses [protein]-with a C-terminal TM segment(out) + ATP + H2O = [protein]-with a C-terminal TM segment(in) + ADP + phosphate + H(+). Outer mitochondrial translocase required to remove mislocalized tail-anchored transmembrane proteins on mitochondria. Specifically recognizes and binds tail-anchored transmembrane proteins: acts as a dislocase that mediates the ATP-dependent extraction of mistargeted tail-anchored transmembrane proteins from the mitochondrion outer membrane. Also plays a critical role in regulating the surface expression of AMPA receptors (AMPAR), thereby regulating synaptic plasticity and learning and memory. Required for NMDA-stimulated AMPAR internalization and inhibition of GRIA1 and GRIA2 recycling back to the plasma membrane; these activities are ATPase-dependent. The sequence is that of Outer mitochondrial transmembrane helix translocase from Rattus norvegicus (Rat).